The sequence spans 97 residues: MSFFRVRLERSAIGLSSKVRSVLHSLRLTKRHSVVYCDVNPINAGRIFKVKELVSVSTVKQKLAAGQEKKSLASSSGFTVIHRYNNGLKELNNMFES.

Belongs to the universal ribosomal protein uL30 family. Component of the mitochondrial large ribosomal subunit (mt-LSU). Mature yeast 74S mitochondrial ribosomes consist of a small (37S) and a large (54S) subunit. The 37S small subunit contains a 15S ribosomal RNA (15S mt-rRNA) and at least 32 different proteins. The 54S large subunit contains a 21S rRNA (21S mt-rRNA) and at least 45 different proteins.

It is found in the mitochondrion. Functionally, component of the mitochondrial ribosome (mitoribosome), a dedicated translation machinery responsible for the synthesis of mitochondrial genome-encoded proteins, including at least some of the essential transmembrane subunits of the mitochondrial respiratory chain. The mitoribosomes are attached to the mitochondrial inner membrane and translation products are cotranslationally integrated into the membrane. The polypeptide is Large ribosomal subunit protein uL30m (mrpl33) (Schizosaccharomyces pombe (strain 972 / ATCC 24843) (Fission yeast)).